An 801-amino-acid chain; its full sequence is PR domain zinc finger protein 4 (801 aa).

Residues K412–S529 form the SET domain. The C2H2-type 1; atypical zinc-finger motif lies at H545 to H566. 4 C2H2-type zinc fingers span residues H618–H640, Y646–H668, L674–H696, and I702–H724. The C2H2-type 6; atypical zinc-finger motif lies at Y730–C752. The segment at T751–E782 is disordered. Residues P762–A776 are compositionally biased toward acidic residues.

This sequence belongs to the class V-like SAM-binding methyltransferase superfamily. As to expression, expressed in many tissues. Highly expressed in ovary, testis, pancreas, brain, heart and prostate.

It localises to the nucleus. Its function is as follows. May function as a transcription factor involved in cell differentiation. This is PR domain zinc finger protein 4 (PRDM4) from Homo sapiens (Human).